Consider the following 611-residue polypeptide: Podocan (611 aa).

An N-terminal signal peptide occupies residues 1–23 (MAGSRGLPLLLLVLQLFLGPVLP). The LRRNT domain maps to 60–97 (PEPGPATVDCPRDCACSQEGVVDCGGIDLREFPGDLPE). LRR repeat units follow at residues 98–119 (HTNH…ELSR), 122–145 (RLET…AFEH), 148–169 (SLNY…LPNA), 170–190 (LISV…TFGQ), and 193–213 (NLRS…PDHM). Asn215 carries N-linked (GlcNAc...) asparagine glycosylation. LRR repeat units follow at residues 219–239 (NVEI…HLPP), 240–261 (ALYK…AFSE), 264–284 (NLRE…DNET), 290–311 (SLEY…LPRS), 312–332 (LVLL…VLTP), 335–358 (NLEY…AFQG), 361–382 (KLHT…LPRR), 383–403 (VRTL…DFAT), 406–427 (FLEE…RDAF), 432–453 (LLRS…LPKN), 477–490 (QLRE…RLRS), 503–523 (GLQL…GLPP), 524–545 (SLEY…AFDS), 548–569 (NLKG…ESAF), and 574–583 (HLQVLDIEGN). Asn282 is a glycosylation site (N-linked (GlcNAc...) asparagine). Asn411 carries an N-linked (GlcNAc...) asparagine glycan. Residues 585–611 (EFGNGSKDKDEEEEEEEEEEDEEEETR) form a disordered region. Acidic residues predominate over residues 594-611 (DEEEEEEEEEEDEEEETR).

It belongs to the small leucine-rich proteoglycan (SLRP) family. SLRP class V subfamily. As to quaternary structure, binds to type I collagen. N-glycosylated. In terms of tissue distribution, kidney. Expressed in podocytes and likely vascular endothelial cells within the glomerulus.

It localises to the secreted. The protein localises to the extracellular space. It is found in the extracellular matrix. Functionally, negatively regulates cell proliferation and cell migration, especially in smooth muscle cells. The chain is Podocan (Podn) from Mus musculus (Mouse).